Reading from the N-terminus, the 267-residue chain is Glutamate racemase (267 aa).

Residues 9 to 10 and 41 to 42 each bind substrate; these read DS and YG. Catalysis depends on Cys72, which acts as the Proton donor/acceptor. A substrate-binding site is contributed by 73–74; that stretch reads NT. The Proton donor/acceptor role is filled by Cys184. Residue 185-186 participates in substrate binding; it reads TH.

The protein belongs to the aspartate/glutamate racemases family.

It catalyses the reaction L-glutamate = D-glutamate. It participates in cell wall biogenesis; peptidoglycan biosynthesis. Provides the (R)-glutamate required for cell wall biosynthesis. This Staphylococcus epidermidis (strain ATCC 12228 / FDA PCI 1200) protein is Glutamate racemase.